We begin with the raw amino-acid sequence, 252 residues long: Phosphoglycolate phosphatase (252 aa).

The active-site Nucleophile is the D13. Mg(2+) is bound by residues D13, D15, and D192.

The protein belongs to the HAD-like hydrolase superfamily. CbbY/CbbZ/Gph/YieH family. As to quaternary structure, monomer. Mg(2+) serves as cofactor. Chloride is required as a cofactor.

The enzyme catalyses 2-phosphoglycolate + H2O = glycolate + phosphate. Its pathway is organic acid metabolism; glycolate biosynthesis; glycolate from 2-phosphoglycolate: step 1/1. Specifically catalyzes the dephosphorylation of 2-phosphoglycolate. Is involved in the dissimilation of the intracellular 2-phosphoglycolate formed during the DNA repair of 3'-phosphoglycolate ends, a major class of DNA lesions induced by oxidative stress. This chain is Phosphoglycolate phosphatase, found in Shigella dysenteriae serotype 1 (strain Sd197).